Here is a 458-residue protein sequence, read N- to C-terminus: tRNA-2-methylthio-N(6)-dimethylallyladenosine synthase (458 aa).

Residues 15-134 (KKVFIKTYGC…LPELLEKAKQ (120 aa)) form the MTTase N-terminal domain. Residues Cys-24, Cys-60, Cys-97, Cys-175, Cys-179, and Cys-182 each contribute to the [4Fe-4S] cluster site. A Radical SAM core domain is found at 161–395 (RKRGVSAFLT…LLLEQQNTFL (235 aa)). Residues 396–457 (RSKIGQKTDV…SNSFVGEMTN (62 aa)) enclose the TRAM domain.

This sequence belongs to the methylthiotransferase family. MiaB subfamily. In terms of assembly, monomer. [4Fe-4S] cluster serves as cofactor.

Its subcellular location is the cytoplasm. The catalysed reaction is N(6)-dimethylallyladenosine(37) in tRNA + (sulfur carrier)-SH + AH2 + 2 S-adenosyl-L-methionine = 2-methylsulfanyl-N(6)-dimethylallyladenosine(37) in tRNA + (sulfur carrier)-H + 5'-deoxyadenosine + L-methionine + A + S-adenosyl-L-homocysteine + 2 H(+). Its function is as follows. Catalyzes the methylthiolation of N6-(dimethylallyl)adenosine (i(6)A), leading to the formation of 2-methylthio-N6-(dimethylallyl)adenosine (ms(2)i(6)A) at position 37 in tRNAs that read codons beginning with uridine. The protein is tRNA-2-methylthio-N(6)-dimethylallyladenosine synthase of Bartonella tribocorum (strain CIP 105476 / IBS 506).